The chain runs to 293 residues: Protease HtpX homolog (293 aa).

The next 2 membrane-spanning stretches (helical) occupy residues 4–24 (IFLF…TMRI) and 38–58 (LTGL…ISLL). H146 provides a ligand contact to Zn(2+). Residue E147 is part of the active site. H150 provides a ligand contact to Zn(2+). The next 2 membrane-spanning stretches (helical) occupy residues 161–181 (LIQG…GYFV) and 198–218 (ATVI…VAWF). Zn(2+) is bound at residue E223.

The protein belongs to the peptidase M48B family. It depends on Zn(2+) as a cofactor.

It localises to the cell inner membrane. This chain is Protease HtpX homolog, found in Bordetella parapertussis (strain 12822 / ATCC BAA-587 / NCTC 13253).